The sequence spans 306 residues: NAD kinase 1 (306 aa).

Residue aspartate 67 is the Proton acceptor of the active site. NAD(+) is bound by residues 67–68, 149–150, and aspartate 181; these read DG and NE.

It belongs to the NAD kinase family. A divalent metal cation serves as cofactor.

The protein resides in the cytoplasm. It catalyses the reaction NAD(+) + ATP = ADP + NADP(+) + H(+). Involved in the regulation of the intracellular balance of NAD and NADP, and is a key enzyme in the biosynthesis of NADP. Catalyzes specifically the phosphorylation on 2'-hydroxyl of the adenosine moiety of NAD to yield NADP. The protein is NAD kinase 1 of Thermosynechococcus vestitus (strain NIES-2133 / IAM M-273 / BP-1).